The sequence spans 267 residues: tRNA pseudouridine synthase A (267 aa).

The active-site Nucleophile is the aspartate 51. Residue tyrosine 109 participates in substrate binding.

This sequence belongs to the tRNA pseudouridine synthase TruA family. As to quaternary structure, homodimer.

It carries out the reaction uridine(38/39/40) in tRNA = pseudouridine(38/39/40) in tRNA. Functionally, formation of pseudouridine at positions 38, 39 and 40 in the anticodon stem and loop of transfer RNAs. The polypeptide is tRNA pseudouridine synthase A (Staphylococcus saprophyticus subsp. saprophyticus (strain ATCC 15305 / DSM 20229 / NCIMB 8711 / NCTC 7292 / S-41)).